The following is a 148-amino-acid chain: uncharacterized protein (148 aa).

Over residues 1–17 the composition is skewed to low complexity; the sequence is MCPPVRQRPAQAPPAKR. Disordered regions lie at residues 1-86 and 122-148; these read MCPP…VQSP and RAHR…TSPC. The segment covering 38–57 has biased composition (basic residues); that stretch reads RPPKMQRRPRPPVAKRRRFP. Positions 134–148 are enriched in polar residues; sequence QSRQRPSPDSQTSPC.

This sequence belongs to the Epstein-Barr virus BLLF2 family.

This is an uncharacterized protein from Homo sapiens (Human).